A 186-amino-acid polypeptide reads, in one-letter code: Riboflavin kinase (186 aa).

Residues T42 and N44 each contribute to the Mg(2+) site. The active-site Nucleophile is the E123.

The protein belongs to the flavokinase family. Requires Zn(2+) as cofactor. Mg(2+) serves as cofactor.

It carries out the reaction riboflavin + ATP = FMN + ADP + H(+). It functions in the pathway cofactor biosynthesis; FMN biosynthesis; FMN from riboflavin (ATP route): step 1/1. Catalyzes the phosphorylation of riboflavin (vitamin B2) to form flavin mononucleotide (FMN) coenzyme. The sequence is that of Riboflavin kinase (FMN1) from Eremothecium gossypii (strain ATCC 10895 / CBS 109.51 / FGSC 9923 / NRRL Y-1056) (Yeast).